The following is a 188-amino-acid chain: GPI-anchored hemophore ARB_01017 (188 aa).

The signal sequence occupies residues 1–17 (MKLSVVALAALVSVAAA). The 90-residue stretch at 18 to 107 (QGVSELPKCA…SSSSGSASST (90 aa)) folds into the CFEM domain. Disulfide bonds link cysteine 26/cysteine 64, cysteine 30/cysteine 59, cysteine 39/cysteine 45, and cysteine 47/cysteine 80. Aspartate 42 lines the heme pocket. The segment at 95–163 (TGGSSSSGSA…ATSTGAPTQT (69 aa)) is disordered. A lipid anchor (GPI-anchor amidated asparagine) is attached at asparagine 165. A propeptide spans 166–188 (AAASVNANGGLLAAIAALVIAVA) (removed in mature form).

The protein belongs to the RBT5 family. The GPI-anchor is attached to the protein in the endoplasmic reticulum and serves to target the protein to the cell surface. There, the glucosamine-inositol phospholipid moiety is cleaved off and the GPI-modified mannoprotein is covalently attached via its lipidless GPI glycan remnant to the 1,6-beta-glucan of the outer cell wall layer.

It localises to the secreted. It is found in the cell wall. Its subcellular location is the cell membrane. In terms of biological role, GPI-anchored cell wall protein involved in stabilizing the cell wall. The chain is GPI-anchored hemophore ARB_01017 from Arthroderma benhamiae (strain ATCC MYA-4681 / CBS 112371) (Trichophyton mentagrophytes).